We begin with the raw amino-acid sequence, 447 residues long: Adenylosuccinate synthetase (447 aa).

GTP contacts are provided by residues 35–41 (GDEGKGK) and 63–65 (GHT). Asp-36 acts as the Proton acceptor in catalysis. Mg(2+) contacts are provided by Asp-36 and Gly-63. IMP contacts are provided by residues 36–39 (DEGK), 61–64 (NAGH), Thr-153, Arg-167, Asn-245, Thr-260, and Arg-324. His-64 serves as the catalytic Proton donor. Substrate is bound at residue 320-326 (VTTKRKR). GTP contacts are provided by residues Arg-326, 352-354 (KLD), and 435-437 (GVG).

This sequence belongs to the adenylosuccinate synthetase family. Homodimer. Mg(2+) is required as a cofactor.

The protein localises to the cytoplasm. It carries out the reaction IMP + L-aspartate + GTP = N(6)-(1,2-dicarboxyethyl)-AMP + GDP + phosphate + 2 H(+). The protein operates within purine metabolism; AMP biosynthesis via de novo pathway; AMP from IMP: step 1/2. In terms of biological role, plays an important role in the de novo pathway and in the salvage pathway of purine nucleotide biosynthesis. Catalyzes the first committed step in the biosynthesis of AMP from IMP. The protein is Adenylosuccinate synthetase of Drosophila sechellia (Fruit fly).